We begin with the raw amino-acid sequence, 324 residues long: tRNA pseudouridine synthase B (324 aa).

The active-site Nucleophile is Asp49.

This sequence belongs to the pseudouridine synthase TruB family. Type 1 subfamily.

It catalyses the reaction uridine(55) in tRNA = pseudouridine(55) in tRNA. Responsible for synthesis of pseudouridine from uracil-55 in the psi GC loop of transfer RNAs. This Tolumonas auensis (strain DSM 9187 / NBRC 110442 / TA 4) protein is tRNA pseudouridine synthase B.